Reading from the N-terminus, the 1176-residue chain is Serine/threonine-protein kinase pakF (1176 aa).

Low complexity-rich tracts occupy residues 1-19 (MSNL…ESSS) and 32-52 (NLLN…SGSN). Disordered regions lie at residues 1-231 (MSNL…HESR) and 254-361 (LPST…KKTK). Over residues 64 to 76 (QLPPNYTPPPPPH) the composition is skewed to pro residues. Residues 92–133 (LNNENSDNNNNNNNNNNNNNNNNNNNNNNNNNNNEQLARTES) adopt a coiled-coil conformation. Composition is skewed to low complexity over residues 93–125 (NNEN…NNNN), 133–148 (SSVS…SNSG), and 156–172 (SSNI…ETYS). Polar residues predominate over residues 173–197 (MSPNQTLNSNIDSSEQQHQDLSSSV). Over residues 198–226 (NNNNNNNNNNNNNNNNNNNNNNNNNNNNN) the composition is skewed to low complexity. A compositionally biased stretch (polar residues) spans 254 to 289 (LPSTPTQQNVEIQTTNGGSSETSPNGLISPRPSNDQ). Over residues 316-353 (SLSSSTTTPSTTSSLTSSPSSSSLAISSPNTTAATTTN) the composition is skewed to low complexity. One can recognise a CRIB domain in the interval 370-383 (ISVPYNVIHKMHVD). One can recognise a Protein kinase domain in the interval 394-646 (FILDEKLGDG…PIDLLCHPFL (253 aa)). ATP-binding positions include 400–408 (LGDGAYGSV) and lysine 423. The Proton acceptor role is filled by aspartate 514. Disordered stretches follow at residues 670–723 (IDDL…SDEL), 753–885 (QEEE…GNNL), 968–1083 (HTTS…TGRA), and 1112–1176 (NSNS…NIKK). Composition is skewed to low complexity over residues 682-693 (SQSSSSSSPQSP) and 710-720 (SIISPIPSSPS). Composition is skewed to acidic residues over residues 767–789 (DEQD…EDVD) and 813–844 (DQDD…DEEI). The stretch at 812 to 873 (SDQDDEEEDE…NKKKNKKNNL (62 aa)) forms a coiled coil. Residues 852 to 870 (VRKKKNKSTKKSNKKKNKK) show a composition bias toward basic residues. Composition is skewed to polar residues over residues 873 to 884 (LSTIGKSGSGNN) and 968 to 985 (HTTS…ATNL). Low complexity-rich tracts occupy residues 991 to 1044 (SSSP…RPNS), 1051 to 1066 (NNSS…SSSS), and 1148 to 1176 (SSGS…NIKK).

Belongs to the protein kinase superfamily. STE Ser/Thr protein kinase family. STE20 subfamily. Requires Mg(2+) as cofactor.

It carries out the reaction L-seryl-[protein] + ATP = O-phospho-L-seryl-[protein] + ADP + H(+). It catalyses the reaction L-threonyl-[protein] + ATP = O-phospho-L-threonyl-[protein] + ADP + H(+). The sequence is that of Serine/threonine-protein kinase pakF from Dictyostelium discoideum (Social amoeba).